Here is a 372-residue protein sequence, read N- to C-terminus: tRNA pseudouridine synthase D (372 aa).

Residue D85 is the Nucleophile of the active site. The TRUD domain occupies 160-330 (GFTNYFGYQR…MQGSRRFMWG (171 aa)).

This sequence belongs to the pseudouridine synthase TruD family.

The catalysed reaction is uridine(13) in tRNA = pseudouridine(13) in tRNA. In terms of biological role, responsible for synthesis of pseudouridine from uracil-13 in transfer RNAs. The chain is tRNA pseudouridine synthase D from Campylobacter jejuni subsp. jejuni serotype O:23/36 (strain 81-176).